The chain runs to 505 residues: Histidine ammonia-lyase (505 aa).

Residues 141–143 (ASG) constitute a cross-link (5-imidazolinone (Ala-Gly)). S142 carries the 2,3-didehydroalanine (Ser) modification.

Belongs to the PAL/histidase family. In terms of processing, contains an active site 4-methylidene-imidazol-5-one (MIO), which is formed autocatalytically by cyclization and dehydration of residues Ala-Ser-Gly.

Its subcellular location is the cytoplasm. It carries out the reaction L-histidine = trans-urocanate + NH4(+). It functions in the pathway amino-acid degradation; L-histidine degradation into L-glutamate; N-formimidoyl-L-glutamate from L-histidine: step 1/3. This is Histidine ammonia-lyase from Bacillus cereus (strain AH187).